A 477-amino-acid polypeptide reads, in one-letter code: Glycogen synthase (477 aa).

An ADP-alpha-D-glucose-binding site is contributed by lysine 15.

This sequence belongs to the glycosyltransferase 1 family. Bacterial/plant glycogen synthase subfamily.

The catalysed reaction is [(1-&gt;4)-alpha-D-glucosyl](n) + ADP-alpha-D-glucose = [(1-&gt;4)-alpha-D-glucosyl](n+1) + ADP + H(+). Its pathway is glycan biosynthesis; glycogen biosynthesis. In terms of biological role, synthesizes alpha-1,4-glucan chains using ADP-glucose. The protein is Glycogen synthase of Serratia proteamaculans (strain 568).